Here is a 335-residue protein sequence, read N- to C-terminus: UPF0353 protein MAP_3435c (335 aa).

Helical transmembrane passes span 18–38 and 67–87; these read WFFL…VQQF and VPTI…AGPT. The VWFA domain occupies 98-294; the sequence is VVMLVIDVSE…DSLKNVYSTL (197 aa). Residues 309 to 329 form a helical membrane-spanning segment; it reads MAWMLLGAVVLAGAVLAGLLL.

Belongs to the UPF0353 family.

The protein localises to the cell membrane. The protein is UPF0353 protein MAP_3435c of Mycolicibacterium paratuberculosis (strain ATCC BAA-968 / K-10) (Mycobacterium paratuberculosis).